The chain runs to 360 residues: Putative agmatine deiminase (360 aa).

Cys-353 acts as the Amidino-cysteine intermediate in catalysis.

This sequence belongs to the agmatine deiminase family.

It carries out the reaction agmatine + H2O = N-carbamoylputrescine + NH4(+). The polypeptide is Putative agmatine deiminase (Vibrio parahaemolyticus serotype O3:K6 (strain RIMD 2210633)).